A 298-amino-acid polypeptide reads, in one-letter code: Glutamyl-Q tRNA(Asp) synthetase (298 aa).

L-glutamate is bound by residues Arg-12–Thr-16 and Glu-48. A 'HIGH' region motif is present at residues Pro-15–Ser-25. Zn(2+) contacts are provided by Cys-104, Cys-106, Tyr-118, and Cys-122. L-glutamate-binding residues include Tyr-175 and Arg-193. The 'KMSKS' region signature appears at Lys-231 to Ser-235. Lys-234 is an ATP binding site.

Belongs to the class-I aminoacyl-tRNA synthetase family. GluQ subfamily. It depends on Zn(2+) as a cofactor.

Its function is as follows. Catalyzes the tRNA-independent activation of glutamate in presence of ATP and the subsequent transfer of glutamate onto a tRNA(Asp). Glutamate is transferred on the 2-amino-5-(4,5-dihydroxy-2-cyclopenten-1-yl) moiety of the queuosine in the wobble position of the QUC anticodon. The protein is Glutamyl-Q tRNA(Asp) synthetase of Pseudomonas fluorescens (strain ATCC BAA-477 / NRRL B-23932 / Pf-5).